Reading from the N-terminus, the 264-residue chain is S-adenosylmethionine decarboxylase proenzyme (264 aa).

Ser-112 acts as the Schiff-base intermediate with substrate; via pyruvic acid in catalysis. Ser-112 carries the post-translational modification Pyruvic acid (Ser); by autocatalysis. Catalysis depends on His-117, which acts as the Proton acceptor; for processing activity. Cys-140 acts as the Proton donor; for catalytic activity in catalysis.

This sequence belongs to the prokaryotic AdoMetDC family. Type 2 subfamily. In terms of assembly, heterooctamer of four alpha and four beta chains arranged as a tetramer of alpha/beta heterodimers. The cofactor is pyruvate. Post-translationally, is synthesized initially as an inactive proenzyme. Formation of the active enzyme involves a self-maturation process in which the active site pyruvoyl group is generated from an internal serine residue via an autocatalytic post-translational modification. Two non-identical subunits are generated from the proenzyme in this reaction, and the pyruvate is formed at the N-terminus of the alpha chain, which is derived from the carboxyl end of the proenzyme. The post-translation cleavage follows an unusual pathway, termed non-hydrolytic serinolysis, in which the side chain hydroxyl group of the serine supplies its oxygen atom to form the C-terminus of the beta chain, while the remainder of the serine residue undergoes an oxidative deamination to produce ammonia and the pyruvoyl group blocking the N-terminus of the alpha chain.

The catalysed reaction is S-adenosyl-L-methionine + H(+) = S-adenosyl 3-(methylsulfanyl)propylamine + CO2. Its pathway is amine and polyamine biosynthesis; S-adenosylmethioninamine biosynthesis; S-adenosylmethioninamine from S-adenosyl-L-methionine: step 1/1. Functionally, catalyzes the decarboxylation of S-adenosylmethionine to S-adenosylmethioninamine (dcAdoMet), the propylamine donor required for the synthesis of the polyamines spermine and spermidine from the diamine putrescine. This chain is S-adenosylmethionine decarboxylase proenzyme, found in Photorhabdus laumondii subsp. laumondii (strain DSM 15139 / CIP 105565 / TT01) (Photorhabdus luminescens subsp. laumondii).